The sequence spans 39 residues: Photosystem II reaction center protein J (39 aa).

Residues 7–27 (IPLWIVAVVAGLGVITVVGLF) traverse the membrane as a helical segment.

It belongs to the PsbJ family. In terms of assembly, PSII is composed of 1 copy each of membrane proteins PsbA, PsbB, PsbC, PsbD, PsbE, PsbF, PsbH, PsbI, PsbJ, PsbK, PsbL, PsbM, PsbT, PsbX, PsbY, PsbZ, Psb30/Ycf12, peripheral proteins PsbO, CyanoQ (PsbQ), PsbU, PsbV and a large number of cofactors. It forms dimeric complexes.

It localises to the cellular thylakoid membrane. Its function is as follows. One of the components of the core complex of photosystem II (PSII). PSII is a light-driven water:plastoquinone oxidoreductase that uses light energy to abstract electrons from H(2)O, generating O(2) and a proton gradient subsequently used for ATP formation. It consists of a core antenna complex that captures photons, and an electron transfer chain that converts photonic excitation into a charge separation. The polypeptide is Photosystem II reaction center protein J (Synechococcus sp. (strain JA-2-3B'a(2-13)) (Cyanobacteria bacterium Yellowstone B-Prime)).